We begin with the raw amino-acid sequence, 317 residues long: Nucleosome assembly protein 1;4 (317 aa).

A Nuclear export signal motif is present at residues 52–67; it reads LSPKVTKRVLFLKDIQ. Residues 214-219 carry the Nuclear localization signal motif; the sequence is KKKTKK. The tract at residues 297–317 is disordered; the sequence is ALVDEDDSDDNDDDDNDEKSD. Residues 298–317 are compositionally biased toward acidic residues; the sequence is LVDEDDSDDNDDDDNDEKSD.

This sequence belongs to the nucleosome assembly protein (NAP) family. As to quaternary structure, can form homomeric and heteromeric protein complexes with NAP1;1, NAP1;2 and NAP1;3. Binds histone H2A. As to expression, expressed in the root segment covering the apical end of the differentiation zone, the elongation zone of the root and the mature pollen within the anthers of open flowers.

The protein localises to the nucleus. It is found in the cytoplasm. Its function is as follows. May modulate chromatin structure by regulation of nucleosome assembly/disassembly. The chain is Nucleosome assembly protein 1;4 (NAP1;4) from Arabidopsis thaliana (Mouse-ear cress).